The sequence spans 81 residues: D-alanyl carrier protein (81 aa).

One can recognise a Carrier domain in the interval 1–81 (MADEAIKNGV…KIIAKVEQAQ (81 aa)). An O-(pantetheine 4'-phosphoryl)serine modification is found at Ser-39.

This sequence belongs to the DltC family. Post-translationally, 4'-phosphopantetheine is transferred from CoA to a specific serine of apo-DCP.

Its subcellular location is the cytoplasm. Its pathway is cell wall biogenesis; lipoteichoic acid biosynthesis. In terms of biological role, carrier protein involved in the D-alanylation of lipoteichoic acid (LTA). The loading of thioester-linked D-alanine onto DltC is catalyzed by D-alanine--D-alanyl carrier protein ligase DltA. The DltC-carried D-alanyl group is further transferred to cell membrane phosphatidylglycerol (PG) by forming an ester bond, probably catalyzed by DltD. D-alanylation of LTA plays an important role in modulating the properties of the cell wall in Gram-positive bacteria, influencing the net charge of the cell wall. The protein is D-alanyl carrier protein of Lacticaseibacillus casei (strain BL23) (Lactobacillus casei).